We begin with the raw amino-acid sequence, 68 residues long: uncharacterized protein (68 aa).

A disordered region spans residues 1–42 (MHLCQNGHYYKPHRASAEKVPYLKKKKKNSRNEGKAKKKNEK).

This is an uncharacterized protein from Saccharomyces cerevisiae (strain ATCC 204508 / S288c) (Baker's yeast).